Here is a 152-residue protein sequence, read N- to C-terminus: Protein-export protein SecB (152 aa).

The protein belongs to the SecB family. In terms of assembly, homotetramer, a dimer of dimers. One homotetramer interacts with 1 SecA dimer.

The protein resides in the cytoplasm. One of the proteins required for the normal export of preproteins out of the cell cytoplasm. It is a molecular chaperone that binds to a subset of precursor proteins, maintaining them in a translocation-competent state. It also specifically binds to its receptor SecA. In Thiobacillus denitrificans (strain ATCC 25259 / T1), this protein is Protein-export protein SecB.